The sequence spans 431 residues: MANSC domain-containing protein 1 (431 aa).

Residues 1–26 (MFFGGKGSLTYTLVIICFLTLRLAAS) form the signal peptide. Over 27–385 (QNCLNKSLED…QYGLPFEKWL (359 aa)) the chain is Extracellular. Asn31 carries N-linked (GlcNAc...) asparagine glycosylation. An MANSC domain is found at 33–117 (SLEDVVIDIQ…LKPAKGLRSY (85 aa)). N-linked (GlcNAc...) asparagine glycosylation is found at Asn222 and Asn251. The segment at 236–279 (HTTSATPKPAIRLPTNASVTPSGTSQPQLATTSPPVTTVTSQPP) is disordered. The segment covering 250 to 265 (TNASVTPSGTSQPQLA) has biased composition (polar residues). The span at 266-279 (TTSPPVTTVTSQPP) shows a compositional bias: low complexity. Residues Asn327 and Asn352 are each glycosylated (N-linked (GlcNAc...) asparagine). Residues 352–372 (NKTASWEGREASPGRSSQGNV) form a disordered region. The helical transmembrane segment at 386–408 (LIGSLLFGVLFLVIGLVLLGRIL) threads the bilayer. Over 409–431 (SESLRRKRYSRLDYLINGIYVDI) the chain is Cytoplasmic.

It localises to the membrane. The chain is MANSC domain-containing protein 1 (MANSC1) from Macaca fascicularis (Crab-eating macaque).